A 263-amino-acid chain; its full sequence is Methylesterase 4 (263 aa).

Catalysis depends on S84, which acts as the Acyl-ester intermediate. Active-site charge relay system residues include D213 and H241.

This sequence belongs to the AB hydrolase superfamily. Methylesterase family.

The enzyme catalyses methyl salicylate + H2O = salicylate + methanol + H(+). It functions in the pathway plant hormone biosynthesis. Its activity is regulated as follows. Esterase activity is down-regulated by salicylic acid (SA). Functionally, methylesterase shown to have carboxylesterase activity and methyl salicylate (MeSA) esterase activity in vitro. The sequence is that of Methylesterase 4 from Arabidopsis thaliana (Mouse-ear cress).